The primary structure comprises 257 residues: 3-dehydroquinate dehydratase (257 aa).

Residues 50 to 52 (EWR) and arginine 86 contribute to the 3-dehydroquinate site. The Proton donor/acceptor role is filled by histidine 147. Lysine 174 functions as the Schiff-base intermediate with substrate in the catalytic mechanism. The 3-dehydroquinate site is built by arginine 216, serine 235, and glutamine 239.

Belongs to the type-I 3-dehydroquinase family. In terms of assembly, homodimer.

It carries out the reaction 3-dehydroquinate = 3-dehydroshikimate + H2O. The protein operates within metabolic intermediate biosynthesis; chorismate biosynthesis; chorismate from D-erythrose 4-phosphate and phosphoenolpyruvate: step 3/7. Functionally, involved in the third step of the chorismate pathway, which leads to the biosynthesis of aromatic amino acids. Catalyzes the cis-dehydration of 3-dehydroquinate (DHQ) and introduces the first double bond of the aromatic ring to yield 3-dehydroshikimate. This chain is 3-dehydroquinate dehydratase, found in Geobacillus thermodenitrificans (strain NG80-2).